The chain runs to 300 residues: Protein CANDIDATE G-PROTEIN COUPLED RECEPTOR 2 (300 aa).

A run of 7 helical transmembrane segments spans residues 37–57, 73–93, 110–130, 152–172, 183–203, 222–242, and 245–265; these read GFLH…YLAY, IMIA…AWCC, LTLF…AFLF, IGLD…PLFI, WGLW…IFFM, ITVM…TANG, and FGLW…LPLL.

It belongs to the UPF0359 family. Interacts with GPA1. Expressed at low levels in seedlings.

The protein localises to the cell membrane. Plays a role in plants and microbes interactions. G-protein coupled melatonin receptor involved in root growth mediated by the bacterial quorum-sensing signals N-acyl-homoserine lactones (AHLs). Binds to melatonin. Phytomelatonin receptor required, in collaboration with GPA1, for melatonin-mediated stomatal closure involving H(2)O(2) and Ca(2+) signals. Essential for melatonin-mediated plant response to osmotic stress probably by activating reactive oxygen species (ROS) scavenging ability. The sequence is that of Protein CANDIDATE G-PROTEIN COUPLED RECEPTOR 2 from Arabidopsis thaliana (Mouse-ear cress).